A 372-amino-acid chain; its full sequence is Histidine protein methyltransferase 1 homolog (372 aa).

Disordered regions lie at residues 30–55 (SKEL…QFDL) and 68–103 (NAAP…AKEH). Residues 39–49 (QKGEERDRKCS) show a composition bias toward basic and acidic residues. Residues 70-87 (APSQDTDSPLSAASSSRN) show a composition bias toward polar residues. Residues Ser-72 and Ser-77 each carry the phosphoserine modification. Residue His-154 is modified to Tele-methylhistidine; by autocatalysis. S-adenosyl-L-methionine contacts are provided by residues 168-172 (IWECT), Gly-195, and 216-218 (QDY). The Nuclear localization signal signature appears at 247-253 (PDVKRCR). Residues 268–270 (GEW) and Ser-293 each bind S-adenosyl-L-methionine.

The protein belongs to the methyltransferase superfamily. METTL18 family. In terms of assembly, interacts with GRWD1 and members of the heat shock protein 90 and 70 families; these proteins may possibly be methylation substrates for the enzyme. Post-translationally, monomethylated at His-154 through automethylation. Automethylation at His-154 positively regulates the methyltransferase activity toward RPL3. Probably methylated on other residues.

The protein resides in the cytoplasm. It is found in the cytosol. It localises to the nucleus. Its subcellular location is the nucleolus. The catalysed reaction is L-histidyl-[protein] + S-adenosyl-L-methionine = N(tele)-methyl-L-histidyl-[protein] + S-adenosyl-L-homocysteine + H(+). Its function is as follows. Protein-L-histidine N-tele-methyltransferase that specifically monomethylates RPL3, thereby regulating translation elongation. Histidine methylation of RPL3 regulates translation elongation by slowing ribosome traversal on tyrosine codons: slower elongation provides enough time for proper folding of synthesized proteins and prevents cellular aggregation of tyrosine-rich proteins. The polypeptide is Histidine protein methyltransferase 1 homolog (Homo sapiens (Human)).